We begin with the raw amino-acid sequence, 347 residues long: Phenylalanine--tRNA ligase alpha subunit (347 aa).

Position 261 (E261) interacts with Mg(2+).

The protein belongs to the class-II aminoacyl-tRNA synthetase family. Phe-tRNA synthetase alpha subunit type 1 subfamily. As to quaternary structure, tetramer of two alpha and two beta subunits. The cofactor is Mg(2+).

The protein localises to the cytoplasm. It catalyses the reaction tRNA(Phe) + L-phenylalanine + ATP = L-phenylalanyl-tRNA(Phe) + AMP + diphosphate + H(+). The sequence is that of Phenylalanine--tRNA ligase alpha subunit from Streptococcus thermophilus (strain ATCC BAA-491 / LMD-9).